We begin with the raw amino-acid sequence, 182 residues long: Peptidyl-prolyl cis-trans isomerase H (182 aa).

Residues 15-181 (FFDITIGGEP…LDVVISQCGE (167 aa)) form the PPIase cyclophilin-type domain.

This sequence belongs to the cyclophilin-type PPIase family. PPIase H subfamily.

The protein resides in the nucleus. The enzyme catalyses [protein]-peptidylproline (omega=180) = [protein]-peptidylproline (omega=0). Its function is as follows. PPIases accelerate the folding of proteins. It catalyzes the cis-trans isomerization of proline imidic peptide bonds in oligopeptides. This is Peptidyl-prolyl cis-trans isomerase H (CYP3) from Gibberella zeae (strain ATCC MYA-4620 / CBS 123657 / FGSC 9075 / NRRL 31084 / PH-1) (Wheat head blight fungus).